The chain runs to 657 residues: Putative GreA-associated domains protein (657 aa).

A GRAD2 domain is found at 1 to 152; sequence MDTRDLTAYS…EQEGNKEKAT (152 aa). In terms of domain architecture, GRAD1 spans 153–657; the sequence is EFYKKALYRF…TAGSFGTLWE (505 aa).

The polypeptide is Putative GreA-associated domains protein (Treponema pallidum (strain Nichols)).